We begin with the raw amino-acid sequence, 346 residues long: Phosphoribosylformylglycinamidine cyclo-ligase (346 aa).

This sequence belongs to the AIR synthase family.

The protein resides in the cytoplasm. The catalysed reaction is 2-formamido-N(1)-(5-O-phospho-beta-D-ribosyl)acetamidine + ATP = 5-amino-1-(5-phospho-beta-D-ribosyl)imidazole + ADP + phosphate + H(+). Its pathway is purine metabolism; IMP biosynthesis via de novo pathway; 5-amino-1-(5-phospho-D-ribosyl)imidazole from N(2)-formyl-N(1)-(5-phospho-D-ribosyl)glycinamide: step 2/2. The chain is Phosphoribosylformylglycinamidine cyclo-ligase from Bacillus cereus (strain G9842).